The chain runs to 175 residues: Methylmalonyl-CoA epimerase, mitochondrial (175 aa).

Residues Met-1–His-35 constitute a mitochondrion transit peptide. The region spanning Arg-46–Ala-175 is the VOC domain. His-49 is a binding site for Co(2+). Lys-113 carries the N6-succinyllysine modification. His-121 contributes to the Co(2+) binding site. An N6-acetyllysine; alternate modification is found at Lys-149. An N6-succinyllysine; alternate modification is found at Lys-149. Glu-171 lines the Co(2+) pocket.

This sequence belongs to the methylmalonyl-CoA epimerase family.

The protein localises to the mitochondrion. It catalyses the reaction (R)-methylmalonyl-CoA = (S)-methylmalonyl-CoA. Functionally, methylmalonyl-CoA epimerase involved in propionyl-CoA metabolism. This chain is Methylmalonyl-CoA epimerase, mitochondrial (MCEE), found in Bos taurus (Bovine).